A 263-amino-acid polypeptide reads, in one-letter code: Methylesterase 4 (263 aa).

Residue Ser-84 is the Acyl-ester intermediate of the active site. Residues Asp-213 and His-241 each act as charge relay system in the active site.

Belongs to the AB hydrolase superfamily. Methylesterase family.

The enzyme catalyses methyl salicylate + H2O = salicylate + methanol + H(+). The protein operates within plant hormone biosynthesis. Its activity is regulated as follows. Esterase activity is down-regulated by salicylic acid (SA). Its function is as follows. Methylesterase shown to have carboxylesterase activity and methyl salicylate (MeSA) esterase activity in vitro. This Arabidopsis thaliana (Mouse-ear cress) protein is Methylesterase 4.